Reading from the N-terminus, the 436-residue chain is Putative actin-fragmin kinase DDB_G0268748 (436 aa).

The segment at 14–58 is disordered; sequence DKNIDSGSSSSNIGGSSSNSSGTTNKRSSGNFNGSSASSSPSSST. Low complexity predominate over residues 18 to 57; that stretch reads DSGSSSSNIGGSSSNSSGTTNKRSSGNFNGSSASSSPSSS.

This sequence belongs to the protein kinase superfamily. AFK Ser/Thr protein kinase family.

This Dictyostelium discoideum (Social amoeba) protein is Putative actin-fragmin kinase DDB_G0268748.